A 412-amino-acid chain; its full sequence is L-cysteine:1D-myo-inositol 2-amino-2-deoxy-alpha-D-glucopyranoside ligase (412 aa).

Cys45 contacts Zn(2+). L-cysteinyl-5'-AMP contacts are provided by residues 45–48, Thr60, and 83–85; these read CGIT and NIT. A 'HIGH' region motif is present at residues 47 to 57; the sequence is ITPYDAAHLGH. The 'ERGGDP' region signature appears at 185–190; it reads ERGGDP. Trp225 contacts L-cysteinyl-5'-AMP. Cys229 contributes to the Zn(2+) binding site. Position 247 to 249 (247 to 249) interacts with L-cysteinyl-5'-AMP; that stretch reads GDD. Residue His254 participates in Zn(2+) binding. Val281 contacts L-cysteinyl-5'-AMP. Positions 287–291 match the 'KMSKS' region motif; that stretch reads KMSKS.

The protein belongs to the class-I aminoacyl-tRNA synthetase family. MshC subfamily. Monomer. Zn(2+) serves as cofactor.

It carries out the reaction 1D-myo-inositol 2-amino-2-deoxy-alpha-D-glucopyranoside + L-cysteine + ATP = 1D-myo-inositol 2-(L-cysteinylamino)-2-deoxy-alpha-D-glucopyranoside + AMP + diphosphate + H(+). Catalyzes the ATP-dependent condensation of GlcN-Ins and L-cysteine to form L-Cys-GlcN-Ins. The polypeptide is L-cysteine:1D-myo-inositol 2-amino-2-deoxy-alpha-D-glucopyranoside ligase (Thermobifida fusca (strain YX)).